The following is a 99-amino-acid chain: Transposase InsE for insertion sequence IS3A (99 aa).

Positions 1–21 are disordered; the sequence is MTKTVSTSKKPRKQHSPEFRS.

This sequence belongs to the transposase 8 family.

Functionally, involved in the transposition of the insertion sequence IS3. The polypeptide is Transposase InsE for insertion sequence IS3A (insE1) (Escherichia coli (strain K12)).